The following is a 264-amino-acid chain: Small ribosomal subunit protein uS2 (264 aa).

Belongs to the universal ribosomal protein uS2 family.

This chain is Small ribosomal subunit protein uS2, found in Latilactobacillus sakei subsp. sakei (strain 23K) (Lactobacillus sakei subsp. sakei).